The chain runs to 66 residues: Phylloseptin-H9 (66 aa).

The signal sequence occupies residues methionine 1 to cysteine 22. Residues glutamate 23–glutamate 44 constitute a propeptide that is removed on maturation. Positions glutamate 24 to glutamate 44 are disordered. The segment covering glutamate 30–lysine 41 has biased composition (acidic residues). A Leucine amide modification is found at leucine 65.

In terms of tissue distribution, expressed by the skin glands.

It is found in the secreted. Has antimicrobial activity. The sequence is that of Phylloseptin-H9 from Pithecopus hypochondrialis (Orange-legged leaf frog).